Here is a 97-residue protein sequence, read N- to C-terminus: Large ribosomal subunit protein bL27 (97 aa).

Positions 1 to 9 (MFTFDLQLF) are excised as a propeptide.

The protein belongs to the bacterial ribosomal protein bL27 family. Post-translationally, the N-terminus is cleaved by ribosomal processing cysteine protease Prp.

The chain is Large ribosomal subunit protein bL27 from Syntrophomonas wolfei subsp. wolfei (strain DSM 2245B / Goettingen).